A 91-amino-acid polypeptide reads, in one-letter code: Ragulator complex protein LAMTOR5 homolog (91 aa).

This sequence belongs to the LAMTOR5 family. As to quaternary structure, part of the Ragulator complex.

It localises to the cytoplasm. The protein localises to the lysosome. Regulator of the TOR pathway, a signaling cascade that promotes cell growth in response to growth factors, energy levels, and amino acids. As part of the Ragulator complex, may activate the TOR signaling cascade in response to amino acids. The chain is Ragulator complex protein LAMTOR5 homolog from Nematostella vectensis (Starlet sea anemone).